The chain runs to 145 residues: D-aminoacyl-tRNA deacylase (145 aa).

Positions 137 to 138 (GP) match the Gly-cisPro motif, important for rejection of L-amino acids motif.

This sequence belongs to the DTD family. Homodimer.

The protein localises to the cytoplasm. The enzyme catalyses glycyl-tRNA(Ala) + H2O = tRNA(Ala) + glycine + H(+). The catalysed reaction is a D-aminoacyl-tRNA + H2O = a tRNA + a D-alpha-amino acid + H(+). In terms of biological role, an aminoacyl-tRNA editing enzyme that deacylates mischarged D-aminoacyl-tRNAs. Also deacylates mischarged glycyl-tRNA(Ala), protecting cells against glycine mischarging by AlaRS. Acts via tRNA-based rather than protein-based catalysis; rejects L-amino acids rather than detecting D-amino acids in the active site. By recycling D-aminoacyl-tRNA to D-amino acids and free tRNA molecules, this enzyme counteracts the toxicity associated with the formation of D-aminoacyl-tRNA entities in vivo and helps enforce protein L-homochirality. This Sodalis glossinidius (strain morsitans) protein is D-aminoacyl-tRNA deacylase.